Reading from the N-terminus, the 138-residue chain is Basic phospholipase A2 ammodytoxin C (138 aa).

The first 16 residues, 1-16 (MRTLWIVAVCLIGVEG), serve as a signal peptide directing secretion. Cystine bridges form between cysteine 42/cysteine 131, cysteine 44/cysteine 60, cysteine 59/cysteine 111, cysteine 65/cysteine 138, cysteine 66/cysteine 104, cysteine 73/cysteine 97, and cysteine 91/cysteine 102. Tyrosine 43, glycine 45, and glycine 47 together coordinate Ca(2+). The active site involves histidine 63. Position 64 (aspartate 64) interacts with Ca(2+). Aspartate 105 is a catalytic residue.

This sequence belongs to the phospholipase A2 family. Group II subfamily. D49 sub-subfamily. In terms of assembly, monomer. Binds to calmodulin, coagulation factor X (F10), 14-3-3 proteins gamma (YWHAG) and epsilon (YWHAE), and R25, a mitochondrial membrane protein. May bind to M-type PLA2 receptor (R-180). Ca(2+) serves as cofactor. As to expression, expressed by the venom gland.

The protein resides in the secreted. It localises to the host cytoplasm. It is found in the host cytosol. The enzyme catalyses a 1,2-diacyl-sn-glycero-3-phosphocholine + H2O = a 1-acyl-sn-glycero-3-phosphocholine + a fatty acid + H(+). In terms of biological role, snake venom phospholipase A2 (PLA2) that acts as a presynaptic neurotoxin, an inhibitor of blood coagulation, and has been found to bind with high affinity to intracellular proteins. The response of indirectly stimulated neuromuscular preparations to ammodytoxin (Atx) is triphasic. The first phase, the transient inhibition of the acetylcholine (ACh) release, starts soon after the addition of Atx and lasts for several minutes. This phase is probably independent of Atx enzymatic activity. The effect may be due to the specific binding of the toxin to presynaptic receptors. These receptors, called N-type receptors, are still unidentified. It is noteworthy that a neuronal isoform of the M-type PLA2 receptor (R180) has been identified as a high-affinity receptor for Atx in neuronal plasma membranes. It was demonstrated however that this receptor is not essential for expression of neurotoxicity by Atx. The second phase corresponds to an augmentation of neurotransmitter release. A peak is reached 10-20 minutes after exposure of the preparation to Atx and is followed by a gradual reduction. In this phase, the enzymatic activity of Atx of the mammalian is not significant. It is speculated that the increased release of neurotransmitter in this phase is induced by the interference of Atx with voltage-gated potassium channels. Measurements of ionic showed however that voltage-gated potassium channels are not affected by Atx. The third phase of the response of neuromuscular preparations to Atx, which corresponds to a complete and irreversible paralysis, is clearly dependent on the hydrolytic activity of the toxin. In addition to its presynaptic neurotoxicity, Atx shows an anticoagulant activity by binding with high affinity to activated coagulation factor X (F10) thus inhibiting the formation of the prothrombinase complex (FX/FV) and its activity (IC(50) is 240 nM). Surprisingly, Atx was discovered to bind intracellular proteins such as calmodulin (CaM), 14-3-3 proteins gamma (YWHAG) and epsilon (YWHAE), as well as R25, a mitochondrial integral membrane protein found in cerebral cortex. These findings raised a doubt about the dogma of the exclusively extracellular action of PLA2s, defended by the potential instability of these molecules in the reducing environment of the eukaryotic cytosol coupled with their possible inability to act as enzymes in this cellular compartment, due to too low concentration of calcium ions. This hypothesis was challenged efficiently by demonstrating the internalization of AtxA into a culture cells, but still remains to be directly demonstrated in vivo. PLA2 catalyzes the calcium-dependent hydrolysis of the 2-acyl groups in 3-sn-phosphoglycerides. This is Basic phospholipase A2 ammodytoxin C from Vipera ammodytes ammodytes (Western sand viper).